Here is a 61-residue protein sequence, read N- to C-terminus: MAKVSMIIKSQRKPKFKVQQHNRCEVCGRPKAFYRKFRMCRICLRKYASIGQIPGVIKSSW.

Zn(2+) is bound by residues C24, C27, C40, and C43.

The protein belongs to the universal ribosomal protein uS14 family. Zinc-binding uS14 subfamily. As to quaternary structure, part of the 30S ribosomal subunit. Contacts proteins S3 and S10. Zn(2+) is required as a cofactor.

Its function is as follows. Binds 16S rRNA, required for the assembly of 30S particles and may also be responsible for determining the conformation of the 16S rRNA at the A site. This chain is Small ribosomal subunit protein uS14, found in Pelobacter propionicus (strain DSM 2379 / NBRC 103807 / OttBd1).